The chain runs to 404 residues: Acetate kinase (404 aa).

Asparagine 8 contacts Mg(2+). Lysine 15 contacts ATP. Arginine 92 is a substrate binding site. The active-site Proton donor/acceptor is aspartate 149. ATP is bound by residues 207–211 (HLGSG), 282–284 (DMR), and 327–331 (GIGEN). Mg(2+) is bound at residue glutamate 378.

It belongs to the acetokinase family. Homodimer. Requires Mg(2+) as cofactor. The cofactor is Mn(2+).

The protein localises to the cytoplasm. It carries out the reaction acetate + ATP = acetyl phosphate + ADP. The protein operates within metabolic intermediate biosynthesis; acetyl-CoA biosynthesis; acetyl-CoA from acetate: step 1/2. Its function is as follows. Catalyzes the formation of acetyl phosphate from acetate and ATP. Can also catalyze the reverse reaction. The protein is Acetate kinase of Nitrobacter hamburgensis (strain DSM 10229 / NCIMB 13809 / X14).